The primary structure comprises 107 residues: UPF0145 protein YbjQ (107 aa).

This sequence belongs to the UPF0145 family.

The protein is UPF0145 protein YbjQ of Shigella flexneri.